The chain runs to 459 residues: Protein FAM90A27P (459 aa).

Positions 1-10 (MARHSVHHQA) are enriched in basic residues. Disordered stretches follow at residues 1-41 (MARH…ESRV), 74-136 (SHKE…WKEP), 153-239 (HTTK…ALQP), and 259-459 (PDAD…SDSD). Residues 125-136 (PQEKMQEAWKEP) show a composition bias toward basic and acidic residues. Residues 184–194 (HNDSPQLSTCG) are compositionally biased toward polar residues. Low complexity predominate over residues 341–353 (KATAETAATKTAT). Residues 415-427 (PPENSASAQSPRF) show a composition bias toward polar residues.

This sequence belongs to the FAM90 family.

This chain is Protein FAM90A27P (FAM90A27P), found in Homo sapiens (Human).